The following is a 223-amino-acid chain: Prolactin-3D4 (223 aa).

Residues 1 to 28 form the signal peptide; sequence MQLTLTLSGSSMQLLLLVSNLLLWENMA. 2 disulfide bridges follow: cysteine 80–cysteine 198 and cysteine 215–cysteine 223. Residues asparagine 108 and asparagine 157 are each glycosylated (N-linked (GlcNAc...) asparagine).

Belongs to the somatotropin/prolactin family. N-glycosylated.

It is found in the secreted. In Rattus norvegicus (Rat), this protein is Prolactin-3D4 (Prl3d4).